We begin with the raw amino-acid sequence, 756 residues long: 5-methyltetrahydropteroyltriglutamate--homocysteine methyltransferase (756 aa).

Residues 16–19 (RELK) and lysine 116 each bind 5-methyltetrahydropteroyltri-L-glutamate. Residues 433–435 (IGS) and glutamate 486 each bind L-homocysteine. L-methionine-binding positions include 433–435 (IGS) and glutamate 486. 5-methyltetrahydropteroyltri-L-glutamate contacts are provided by residues 517-518 (RC) and tryptophan 563. L-homocysteine is bound at residue aspartate 601. Position 601 (aspartate 601) interacts with L-methionine. Glutamate 607 lines the 5-methyltetrahydropteroyltri-L-glutamate pocket. Residues histidine 643, cysteine 645, and glutamate 667 each contribute to the Zn(2+) site. The active-site Proton donor is the histidine 696. Cysteine 728 is a binding site for Zn(2+).

This sequence belongs to the vitamin-B12 independent methionine synthase family. The cofactor is Zn(2+).

It carries out the reaction 5-methyltetrahydropteroyltri-L-glutamate + L-homocysteine = tetrahydropteroyltri-L-glutamate + L-methionine. It participates in amino-acid biosynthesis; L-methionine biosynthesis via de novo pathway; L-methionine from L-homocysteine (MetE route): step 1/1. Its function is as follows. Catalyzes the transfer of a methyl group from 5-methyltetrahydrofolate to homocysteine resulting in methionine formation. The protein is 5-methyltetrahydropteroyltriglutamate--homocysteine methyltransferase of Buchnera aphidicola subsp. Baizongia pistaciae (strain Bp).